A 120-amino-acid chain; its full sequence is Immunoglobulin kappa variable 2D-29 (120 aa).

The first 20 residues, 1–20 (MRLPAQLLGLLMLWIPGSSA), serve as a signal peptide directing secretion. The tract at residues 21–43 (DIVMTQTPLSLSVTPGQPASISC) is framework-1. In terms of domain architecture, Ig-like spans 21 to 120 (DIVMTQTPLS…YYCMQSIQLP (100 aa)). A disulfide bridge connects residues cysteine 43 and cysteine 113. Positions 44 to 59 (KSSQSLLHSDGKTYLY) are complementarity-determining-1. A framework-2 region spans residues 60–74 (WYLQKPGQPPQLLIY). Positions 75–81 (EVSNRFS) are complementarity-determining-2. The tract at residues 82–113 (GVPDRFSGSGSGTDFTLKISRVEAEDVGVYYC) is framework-3. The interval 114–120 (MQSIQLP) is complementarity-determining-3.

Immunoglobulins are composed of two identical heavy chains and two identical light chains; disulfide-linked.

The protein localises to the secreted. The protein resides in the cell membrane. Its function is as follows. V region of the variable domain of immunoglobulin light chains that participates in the antigen recognition. Immunoglobulins, also known as antibodies, are membrane-bound or secreted glycoproteins produced by B lymphocytes. In the recognition phase of humoral immunity, the membrane-bound immunoglobulins serve as receptors which, upon binding of a specific antigen, trigger the clonal expansion and differentiation of B lymphocytes into immunoglobulins-secreting plasma cells. Secreted immunoglobulins mediate the effector phase of humoral immunity, which results in the elimination of bound antigens. The antigen binding site is formed by the variable domain of one heavy chain, together with that of its associated light chain. Thus, each immunoglobulin has two antigen binding sites with remarkable affinity for a particular antigen. The variable domains are assembled by a process called V-(D)-J rearrangement and can then be subjected to somatic hypermutations which, after exposure to antigen and selection, allow affinity maturation for a particular antigen. The protein is Immunoglobulin kappa variable 2D-29 of Homo sapiens (Human).